A 609-amino-acid chain; its full sequence is 1-deoxy-D-xylulose-5-phosphate synthase (609 aa).

Thiamine diphosphate is bound by residues His77 and 118-120; that span reads GHS. Residue Asp149 participates in Mg(2+) binding. Thiamine diphosphate is bound by residues 150–151, Asn178, Tyr259, and Glu342; that span reads GA. Residue Asn178 coordinates Mg(2+).

Belongs to the transketolase family. DXPS subfamily. In terms of assembly, homodimer. Mg(2+) serves as cofactor. Thiamine diphosphate is required as a cofactor.

The catalysed reaction is D-glyceraldehyde 3-phosphate + pyruvate + H(+) = 1-deoxy-D-xylulose 5-phosphate + CO2. It participates in metabolic intermediate biosynthesis; 1-deoxy-D-xylulose 5-phosphate biosynthesis; 1-deoxy-D-xylulose 5-phosphate from D-glyceraldehyde 3-phosphate and pyruvate: step 1/1. Its function is as follows. Catalyzes the acyloin condensation reaction between C atoms 2 and 3 of pyruvate and glyceraldehyde 3-phosphate to yield 1-deoxy-D-xylulose-5-phosphate (DXP). The sequence is that of 1-deoxy-D-xylulose-5-phosphate synthase from Listeria monocytogenes serotype 4b (strain CLIP80459).